Consider the following 391-residue polypeptide: Mannonate dehydratase (391 aa).

This sequence belongs to the mannonate dehydratase family. Requires Fe(2+) as cofactor. The cofactor is Mn(2+).

It carries out the reaction D-mannonate = 2-dehydro-3-deoxy-D-gluconate + H2O. It participates in carbohydrate metabolism; pentose and glucuronate interconversion. In terms of biological role, catalyzes the dehydration of D-mannonate. The sequence is that of Mannonate dehydratase from Marinomonas sp. (strain MWYL1).